The sequence spans 415 residues: Histidine--tRNA ligase (415 aa).

This sequence belongs to the class-II aminoacyl-tRNA synthetase family. Homodimer.

It is found in the cytoplasm. The enzyme catalyses tRNA(His) + L-histidine + ATP = L-histidyl-tRNA(His) + AMP + diphosphate + H(+). The chain is Histidine--tRNA ligase from Rickettsia bellii (strain RML369-C).